The primary structure comprises 628 residues: Methionine--tRNA ligase (628 aa).

A 'HIGH' region motif is present at residues 9 to 19 (YYVNDVPHLGH). C124, C127, C142, and C145 together coordinate Zn(2+). The short motif at 294-298 (KMSKS) is the 'KMSKS' region element. K297 lines the ATP pocket. In terms of domain architecture, tRNA-binding spans 527-628 (DFAKIEIKVA…QLVQNGSLVG (102 aa)).

It belongs to the class-I aminoacyl-tRNA synthetase family. MetG type 2A subfamily. In terms of assembly, homodimer. The cofactor is Zn(2+).

The protein localises to the cytoplasm. The catalysed reaction is tRNA(Met) + L-methionine + ATP = L-methionyl-tRNA(Met) + AMP + diphosphate. In terms of biological role, is required not only for elongation of protein synthesis but also for the initiation of all mRNA translation through initiator tRNA(fMet) aminoacylation. The sequence is that of Methionine--tRNA ligase (metG) from Campylobacter jejuni subsp. jejuni serotype O:2 (strain ATCC 700819 / NCTC 11168).